Here is a 275-residue protein sequence, read N- to C-terminus: Undecaprenyl-diphosphatase (275 aa).

7 helical membrane-spanning segments follow: residues 1–21 (MTTF…FLPV), 41–61 (ILFL…FVYA), 95–115 (LLII…KDLF), 118–138 (FYNS…LLWT), 192–212 (ATKF…VFEV), 223–243 (FTLT…VFAI), and 255–275 (LYYF…FSLL).

This sequence belongs to the UppP family.

Its subcellular location is the cell membrane. It carries out the reaction di-trans,octa-cis-undecaprenyl diphosphate + H2O = di-trans,octa-cis-undecaprenyl phosphate + phosphate + H(+). Catalyzes the dephosphorylation of undecaprenyl diphosphate (UPP). Confers resistance to bacitracin. The chain is Undecaprenyl-diphosphatase from Alkaliphilus metalliredigens (strain QYMF).